Consider the following 605-residue polypeptide: UvrABC system protein C (605 aa).

The region spanning 14 to 92 is the GIY-YIG domain; that stretch reads QSCGVYKMVG…IKSLKPLYNI (79 aa). The 36-residue stretch at 202-237 folds into the UVR domain; it reads KEVKEQLLFTMRKCSSEENYELAAIYRDRVKFLEQI.

The protein belongs to the UvrC family. As to quaternary structure, interacts with UvrB in an incision complex.

Its subcellular location is the cytoplasm. Its function is as follows. The UvrABC repair system catalyzes the recognition and processing of DNA lesions. UvrC both incises the 5' and 3' sides of the lesion. The N-terminal half is responsible for the 3' incision and the C-terminal half is responsible for the 5' incision. This is UvrABC system protein C from Wolbachia sp. subsp. Drosophila simulans (strain wRi).